The primary structure comprises 540 residues: MAKDPGRVLIFDTTLRDGEQSPGASLNLEEKLAIAQQLARLGVDVIEAGFPFASQGDFAAVQRIAQQVGGDEGPIICGLARASRADIKACADAVAPAPRRRIHTFIATSDIHLEHKLRKSRAEVLAIVPEMVAYARSLVDDVEFSCEDAARSDPEFLYEVIEAAIAAGAGTINIPDTVGFTTPSEFGALIAGIDCHVPNMNEAVISVHGHNDLGLAVANFLEAVKSGARQFECTINGIGERAGNAALEELVMALYVRRRYFNPFFGREPDSPTPLTAVRTEEITKTSRLVSNLTGMVVQPNKAIVGSNAFAHESGIHQDGVLKNRLTYEIVDARTVGLSDNRISLGKLSGRSAVRARLEELGYDLTREDLDEAFARFKDLADRKRDITDRDLEAIVSEQVQQSEARFQLRLVQVSCGSSLRPTATVILAQEDGQEQTAAAVGTGPVDAVCRALNALAGEPNELIEFSVKSVTEGIDAMGEVTIRLRRDGQLFSGHSADTDVVVAAAQAFVNALNRLVAGCGRQSLHPQHDAVLADLRSGI.

One can recognise a Pyruvate carboxyltransferase domain in the interval 8-269; that stretch reads VLIFDTTLRD…YFNPFFGREP (262 aa). The Mn(2+) site is built by D17, H208, H210, and N244. Positions 408–540 are regulatory domain; it reads QLRLVQVSCG…AVLADLRSGI (133 aa).

The protein belongs to the alpha-IPM synthase/homocitrate synthase family. LeuA type 1 subfamily. Homodimer. Mn(2+) is required as a cofactor.

It localises to the cytoplasm. The enzyme catalyses 3-methyl-2-oxobutanoate + acetyl-CoA + H2O = (2S)-2-isopropylmalate + CoA + H(+). Its pathway is amino-acid biosynthesis; L-leucine biosynthesis; L-leucine from 3-methyl-2-oxobutanoate: step 1/4. Functionally, catalyzes the condensation of the acetyl group of acetyl-CoA with 3-methyl-2-oxobutanoate (2-ketoisovalerate) to form 3-carboxy-3-hydroxy-4-methylpentanoate (2-isopropylmalate). This chain is 2-isopropylmalate synthase, found in Prochlorococcus marinus (strain MIT 9313).